Reading from the N-terminus, the 70-residue chain is ATP synthase subunit c (70 aa).

2 helical membrane passes run Ile-4–Ile-24 and Ile-45–Phe-65.

The protein belongs to the ATPase C chain family. In terms of assembly, F-type ATPases have 2 components, F(1) - the catalytic core - and F(0) - the membrane proton channel. F(1) has five subunits: alpha(3), beta(3), gamma(1), delta(1), epsilon(1). F(0) has three main subunits: a(1), b(2) and c(10-14). The alpha and beta chains form an alternating ring which encloses part of the gamma chain. F(1) is attached to F(0) by a central stalk formed by the gamma and epsilon chains, while a peripheral stalk is formed by the delta and b chains.

Its subcellular location is the cell membrane. Functionally, f(1)F(0) ATP synthase produces ATP from ADP in the presence of a proton or sodium gradient. F-type ATPases consist of two structural domains, F(1) containing the extramembraneous catalytic core and F(0) containing the membrane proton channel, linked together by a central stalk and a peripheral stalk. During catalysis, ATP synthesis in the catalytic domain of F(1) is coupled via a rotary mechanism of the central stalk subunits to proton translocation. In terms of biological role, key component of the F(0) channel; it plays a direct role in translocation across the membrane. A homomeric c-ring of between 10-14 subunits forms the central stalk rotor element with the F(1) delta and epsilon subunits. This Staphylococcus aureus (strain Mu3 / ATCC 700698) protein is ATP synthase subunit c.